We begin with the raw amino-acid sequence, 217 residues long: Adenylate kinase (217 aa).

11 to 16 (GAGKGT) contributes to the ATP binding site. The NMP stretch occupies residues 31–60 (STGDMFREAMANETPVGLEAKSYIDKGDLV). AMP-binding positions include threonine 32, arginine 37, 58-60 (DLV), 86-89 (GFPR), and glutamine 93. Residues 127 to 165 (ARYICKNCGATYNKISNPTKVEGTCDRCGGHEFFQREDD) form an LID region. Arginine 128 contributes to the ATP binding site. Residues cysteine 131 and cysteine 134 each contribute to the Zn(2+) site. ATP is bound at residue 137–138 (TY). Positions 151 and 154 each coordinate Zn(2+). Arginine 162 and arginine 173 together coordinate AMP. Residue glutamine 201 participates in ATP binding.

Belongs to the adenylate kinase family. As to quaternary structure, monomer.

It is found in the cytoplasm. The catalysed reaction is AMP + ATP = 2 ADP. It participates in purine metabolism; AMP biosynthesis via salvage pathway; AMP from ADP: step 1/1. Functionally, catalyzes the reversible transfer of the terminal phosphate group between ATP and AMP. Plays an important role in cellular energy homeostasis and in adenine nucleotide metabolism. This is Adenylate kinase from Lactobacillus gasseri (strain ATCC 33323 / DSM 20243 / BCRC 14619 / CIP 102991 / JCM 1131 / KCTC 3163 / NCIMB 11718 / NCTC 13722 / AM63).